Reading from the N-terminus, the 211-residue chain is MEDFWEDWDLAFEDVFPKSLKEALEGIKEIPTYGERGASRFMYNLLKLEKEKRKEIIEKVLEAVEVLRPCRECFLITDREVCPICSDEKRSKKFICVVEESQDAYAIEKLERYKGVYHVLQGHIAPLEGISAEDLTIDALMERIKKYQPKEVILATNPNVEGEATANYIAGLIRRKFPAVKITRTAYGFQFGSLIEFVDEYSLEKSMENRK.

The C4-type zinc-finger motif lies at 70–85 (CRECFLITDREVCPIC). The Toprim domain occupies 93–190 (KFICVVEESQ…KITRTAYGFQ (98 aa)).

The protein belongs to the RecR family.

May play a role in DNA repair. It seems to be involved in an RecBC-independent recombinational process of DNA repair. It may act with RecF and RecO. This is Recombination protein RecR from Aquifex aeolicus (strain VF5).